The sequence spans 319 residues: Bidirectional sugar transporter SWEET15 (319 aa).

Residues 1-10 lie on the Extracellular side of the membrane; it reads MAFMSMERST. The helical transmembrane segment at 11–31 threads the bilayer; that stretch reads WAFTFGILGNLISLMVFLSPL. In terms of domain architecture, MtN3/slv 1 spans 13–99; the sequence is FTFGILGNLI…AMYLAYAPKS (87 aa). The Cytoplasmic segment spans residues 32–50; that stretch reads PTFYRVYRKKSTEGFQSTP. A helical membrane pass occupies residues 51–71; that stretch reads YVVTLFSCMLWMYYAFVKSGA. E72 is a topological domain (extracellular). The chain crosses the membrane as a helical span at residues 73–93; sequence LLVTINGVGCVIETVYLAMYL. Over 94-106 the chain is Cytoplasmic; the sequence is AYAPKSARMLTAK. The helical transmembrane segment at 107-127 threads the bilayer; it reads MLLGLNIGLFGVIALVTLLLS. At 128–134 the chain is on the extracellular side; it reads RGELRVH. The helical transmembrane segment at 135–155 threads the bilayer; sequence VLGWICVAVSLSVFAAPLSII. Positions 135-219 constitute a MtN3/slv 2 domain; that stretch reads VLGWICVAVS…ALYMAYRSKK (85 aa). Topologically, residues 156–167 are cytoplasmic; that stretch reads RLVIRTKSVEFM. Residues 168 to 188 traverse the membrane as a helical segment; sequence PFSLSFFLVLSAVIWFLYGLL. Topologically, residues 189–191 are extracellular; that stretch reads KKD. A helical transmembrane segment spans residues 192–212; it reads VFVALPNVLGFVFGVAQMALY. Residues 213–319 lie on the Cytoplasmic side of the membrane; the sequence is MAYRSKKPLV…KPDMAIVVEV (107 aa).

It belongs to the SWEET sugar transporter family. Forms homooligomers and/or heterooligomers.

The protein localises to the cell membrane. Mediates both low-affinity uptake and efflux of sugar across the plasma membrane. This chain is Bidirectional sugar transporter SWEET15 (SWEET15), found in Oryza sativa subsp. indica (Rice).